Here is a 294-residue protein sequence, read N- to C-terminus: Glycine--tRNA ligase alpha subunit (294 aa).

The protein belongs to the class-II aminoacyl-tRNA synthetase family. As to quaternary structure, tetramer of two alpha and two beta subunits.

Its subcellular location is the cytoplasm. The catalysed reaction is tRNA(Gly) + glycine + ATP = glycyl-tRNA(Gly) + AMP + diphosphate. The polypeptide is Glycine--tRNA ligase alpha subunit (Oleidesulfovibrio alaskensis (strain ATCC BAA-1058 / DSM 17464 / G20) (Desulfovibrio alaskensis)).